Consider the following 196-residue polypeptide: MSASALVCLAPGSEETEAVTTIDLLVRGGIKVTTASVASDGNLAITCSRGVKLLADAPLVEVADGEYDVIVLPGGIKGAECFRDSTLLVETVKQFHRSGRIVAAICAAPATVLVPHDIFPIGNMTGFPTLKDKIPAEQWLDKRVVWDARVKLLTSQGPGTAIDFGLKIIDLLVGREKAHEVASQLVMAAGIYNYYE.

The active-site Nucleophile is the Cys-106. Cys-106 bears the Cysteine sulfinic acid (-SO2H); alternate mark.

It belongs to the peptidase C56 family. Homodimer. Cys-106 is easily oxidized to sulfinic acid.

The catalysed reaction is N(omega)-(1-hydroxy-2-oxopropyl)-L-arginyl-[protein] + H2O = lactate + L-arginyl-[protein] + H(+). The enzyme catalyses N(6)-(1-hydroxy-2-oxopropyl)-L-lysyl-[protein] + H2O = lactate + L-lysyl-[protein] + H(+). It carries out the reaction S-(1-hydroxy-2-oxopropyl)-L-cysteinyl-[protein] + H2O = lactate + L-cysteinyl-[protein] + H(+). It catalyses the reaction N(omega)-(1-hydroxy-2-oxoethyl)-L-arginyl-[protein] + H2O = L-arginyl-[protein] + glycolate + H(+). The catalysed reaction is N(6)-(1-hydroxy-2-oxoethyl)-L-lysyl-[protein] + H2O = glycolate + L-lysyl-[protein] + H(+). The enzyme catalyses S-(1-hydroxy-2-oxoethyl)-L-cysteinyl-[protein] + H2O = glycolate + L-cysteinyl-[protein] + H(+). It carries out the reaction N(2)-(1-hydroxy-2-oxopropyl)-dGTP + H2O = lactate + dGTP + H(+). It catalyses the reaction N(2)-(1-hydroxy-2-oxopropyl)-GTP + H2O = lactate + GTP + H(+). The catalysed reaction is N(2)-(1-hydroxy-2-oxopropyl)-GDP + H2O = lactate + GDP + H(+). The enzyme catalyses N(2)-(1-hydroxy-2-oxopropyl)-GMP + H2O = lactate + GMP + H(+). It carries out the reaction N(2)-(1-hydroxy-2-oxoethyl)-dGTP + H2O = dGTP + glycolate + H(+). It catalyses the reaction N(2)-(1-hydroxy-2-oxoethyl)-GTP + H2O = glycolate + GTP + H(+). The catalysed reaction is N(2)-(1-hydroxy-2-oxoethyl)-GDP + H2O = glycolate + GDP + H(+). The enzyme catalyses N(2)-(1-hydroxy-2-oxoethyl)-GMP + H2O = glycolate + GMP + H(+). It carries out the reaction an N(2)-(1-hydroxy-2-oxopropyl)-guanosine in RNA + H2O = a guanosine in RNA + lactate + H(+). It catalyses the reaction an N(2)-(1-hydroxy-2-oxopropyl)-2'-deoxyguanosine in DNA + H2O = a 2'-deoxyguanosine in DNA + lactate + H(+). The catalysed reaction is an N(2)-(1-hydroxy-2-oxoethyl)-guanosine in RNA + H2O = a guanosine in RNA + glycolate + H(+). The enzyme catalyses an N(2)-(1-hydroxy-2-oxoethyl)-2'-deoxyguanosine in DNA + H2O = a 2'-deoxyguanosine in DNA + glycolate + H(+). Its activity is regulated as follows. Glyoxalase activity is inhibited by zinc ions. Active as a chaperone in both its reduced and oxidized states, and is more active in its oxidized form. Functionally, protein and nucleotide deglycase that catalyzes the deglycation of the Maillard adducts formed between amino groups of proteins or nucleotides and reactive carbonyl groups of glyoxals. Thus, functions as a protein deglycase that repairs methylglyoxal- and glyoxal-glycated proteins, and releases repaired proteins and lactate or glycolate, respectively. Deglycates cysteine, arginine and lysine residues in proteins, and thus reactivates these proteins by reversing glycation by glyoxals. Is able to repair glycated serum albumin, collagen, glyceraldehyde-3-phosphate dehydrogenase, and fructose biphosphate aldolase. Acts on early glycation intermediates (hemithioacetals and aminocarbinols), preventing the formation of Schiff bases and advanced glycation endproducts (AGE) that cause irreversible damage. Also functions as a nucleotide deglycase able to repair glycated guanine in the free nucleotide pool (GTP, GDP, GMP, dGTP) and in DNA and RNA. Is thus involved in a major nucleotide repair system named guanine glycation repair (GG repair), dedicated to reversing methylglyoxal and glyoxal damage via nucleotide sanitization and direct nucleic acid repair. However, is less efficient than Hsp31 and YhbO, suggesting that YajL might be preferentially dedicated to protein repair. Displays a covalent chaperone activity with sulfenylated thiol proteins by forming mixed disulfides with members of the thiol proteome, and preferentially with sulfenylated cellular proteins, upon oxidative stress; these mixed disulfides can be subsequently reduced by low-molecular-weight thiols to regenerate YajL and reduced proteins. Involved in biogenesis of ribosomal proteins, probably as a ribosomal protein-folding chaperone. Confers resistance to oxidative stress. Plays an important role in protection against electrophile/carbonyl stress. The chaperone activity reported for YajL is probably recruited to execute its deglycase activity, to interact with non-native glycated proteins and gain access to partially buried glycated sites. Also displays an apparent glyoxalase activity that in fact reflects its deglycase activity. This chain is Protein/nucleic acid deglycase 3 (yajL), found in Escherichia coli (strain K12).